We begin with the raw amino-acid sequence, 500 residues long: MAENKYIVGSRDDSDFTTWTAAELAEKIHAREISSQEVTQAHLDRIGEIDGDIHAFLHVGADEALAAASNVDDALAAGDQPTSKLAGVPLALKDVFTTTDAPTTCASKMLEGYMSPYDATVTMRLRAAGIPILGKTNMDEFAMGSSTENSAYGATKNPYDLERTPGGSGGGSSAALAAGMAPLAIGTDTGGSIRQPAALTNTVGVKPTYGTVSRYGLVACASSLDQGGPTARTVLDTALLHEVIAGHDANDSTSSSHAVAPVVEAAKQGASGDLSGVKLGVVKQFEKAEAFQPGVLETYHANLEQLKSQGAELVEVDCPNFDHALNAYYLILPCEVSSNLARFDGMRYGQRRGDDGTRSADQVMSLTRAEGFGPEVKRRIMLGTYALSVGYYDAYYLQAQRVRNLISQDFAKAYEQVDAIVAPVTPSTAFKLGEKVDDPLAMYMFDLFTLPLNLAGVCGMSVPGGFASDSGLPTGLQIMGPAHGDDRLYRVGAAFEAGRS.

Active-site charge relay system residues include lysine 93 and serine 168. The active-site Acyl-ester intermediate is serine 192.

Belongs to the amidase family. GatA subfamily. Heterotrimer of A, B and C subunits.

It carries out the reaction L-glutamyl-tRNA(Gln) + L-glutamine + ATP + H2O = L-glutaminyl-tRNA(Gln) + L-glutamate + ADP + phosphate + H(+). Functionally, allows the formation of correctly charged Gln-tRNA(Gln) through the transamidation of misacylated Glu-tRNA(Gln) in organisms which lack glutaminyl-tRNA synthetase. The reaction takes place in the presence of glutamine and ATP through an activated gamma-phospho-Glu-tRNA(Gln). In Corynebacterium jeikeium (strain K411), this protein is Glutamyl-tRNA(Gln) amidotransferase subunit A.